A 282-amino-acid chain; its full sequence is ABC transporter I family member 21 (282 aa).

Residues isoleucine 13–valine 248 enclose the ABC transporter domain. An ATP-binding site is contributed by glycine 46–threonine 53.

It belongs to the ABC transporter superfamily. ABCI family. Expressed in root elongating zone and root meristem, as well as in elongating etiolated hypocotyls.

The protein resides in the cytoplasm. In Arabidopsis thaliana (Mouse-ear cress), this protein is ABC transporter I family member 21 (ABCI21).